We begin with the raw amino-acid sequence, 344 residues long: Unsaturated rhamnogalacturonyl hydrolase YesR (344 aa).

Residues 30-31 (DW), asparagine 74, and 118-128 (QHTVNAAEYVF) each bind substrate. The active-site Proton donor is aspartate 135. Substrate is bound by residues 198–202 (RANGW) and 308–309 (NA).

It belongs to the glycosyl hydrolase 105 family. Monomer.

It localises to the cytoplasm. The catalysed reaction is 2-O-(4-deoxy-beta-L-threo-hex-4-enopyranuronosyl)-alpha-L-rhamnose + H2O = 5-dehydro-4-deoxy-D-glucuronate + L-rhamnopyranose. Its function is as follows. Catalyzes the hydrolysis of unsaturated rhamnogalacturonan disaccharide to yield unsaturated D-galacturonic acid and L-rhamnose. It cannot act on unsaturated glucuronyl hydrolase (UGL) substrates containing unsaturated D-glucuronic acid at the non-reducing terminus, although the active pockets of YesR and UGL are very similar. In Bacillus subtilis (strain 168), this protein is Unsaturated rhamnogalacturonyl hydrolase YesR (yesR).